The primary structure comprises 777 residues: Acyl-homoserine lactone acylase PvdQ (777 aa).

The first 25 residues, 1–25, serve as a signal peptide directing secretion; it reads MIISRQLPSFCLAALFLSFSGGAHA. A propeptide spans 196-218 (spacer peptide); sequence AGLPAEHWQLAAARQQRFALDRG. Ser-219 serves as the catalytic Nucleophile.

Belongs to the peptidase S45 family. As to quaternary structure, heterodimer of an alpha subunit and a beta subunit processed from the same precursor.

The protein resides in the periplasm. The catalysed reaction is an N-acyl-L-homoserine lactone + H2O = L-homoserine lactone + a carboxylate. In terms of biological role, catalyzes the deacylation of acyl-homoserine lactone (AHL or acyl-HSL), releasing homoserine lactone (HSL) and the corresponding fatty acid. Possesses a specificity for the degradation of long-chain acyl-HSLs (side chains of 11 to 14 carbons in length). In Pseudomonas fluorescens (strain ATCC BAA-477 / NRRL B-23932 / Pf-5), this protein is Acyl-homoserine lactone acylase PvdQ (pvdQ).